The chain runs to 398 residues: Acetate kinase (398 aa).

Asparagine 7 is a Mg(2+) binding site. Residue lysine 14 coordinates ATP. Residue arginine 90 coordinates substrate. Catalysis depends on aspartate 147, which acts as the Proton donor/acceptor. ATP is bound by residues 207–211 (HLGNG), 282–284 (DMR), and 330–334 (GIGEN). A Mg(2+)-binding site is contributed by glutamate 383.

Belongs to the acetokinase family. In terms of assembly, homodimer. It depends on Mg(2+) as a cofactor. Mn(2+) serves as cofactor.

The protein resides in the cytoplasm. It catalyses the reaction acetate + ATP = acetyl phosphate + ADP. It participates in metabolic intermediate biosynthesis; acetyl-CoA biosynthesis; acetyl-CoA from acetate: step 1/2. Catalyzes the formation of acetyl phosphate from acetate and ATP. Can also catalyze the reverse reaction. In Symbiobacterium thermophilum (strain DSM 24528 / JCM 14929 / IAM 14863 / T), this protein is Acetate kinase.